The following is a 403-amino-acid chain: Argininosuccinate synthase (403 aa).

ATP contacts are provided by residues 10–18 (AYSGGLDTS) and Ala-37. Residue Tyr-89 participates in L-citrulline binding. An ATP-binding site is contributed by Gly-119. Positions 121, 125, and 126 each coordinate L-aspartate. Asn-125 contributes to the L-citrulline binding site. L-citrulline contacts are provided by Arg-129, Ser-178, Ser-187, Glu-263, and Tyr-275.

Belongs to the argininosuccinate synthase family. Type 1 subfamily. Homotetramer.

Its subcellular location is the cytoplasm. It carries out the reaction L-citrulline + L-aspartate + ATP = 2-(N(omega)-L-arginino)succinate + AMP + diphosphate + H(+). Its pathway is amino-acid biosynthesis; L-arginine biosynthesis; L-arginine from L-ornithine and carbamoyl phosphate: step 2/3. This chain is Argininosuccinate synthase, found in Idiomarina loihiensis (strain ATCC BAA-735 / DSM 15497 / L2-TR).